The primary structure comprises 396 residues: Elongation factor Tu 2 (396 aa).

Positions 10 to 206 (KPHCNIGTIG…AVDAYIPQPE (197 aa)) constitute a tr-type G domain. Residues 19–26 (GHVDHGKT) form a G1 region. 19-26 (GHVDHGKT) lines the GTP pocket. Residue Thr-26 coordinates Mg(2+). The G2 stretch occupies residues 60–64 (GITIS). The G3 stretch occupies residues 81–84 (DCPG). GTP-binding positions include 81–85 (DCPGH) and 136–139 (NKCD). The tract at residues 136–139 (NKCD) is G4. The tract at residues 174–176 (SAL) is G5.

It belongs to the TRAFAC class translation factor GTPase superfamily. Classic translation factor GTPase family. EF-Tu/EF-1A subfamily. As to quaternary structure, monomer.

The protein localises to the cytoplasm. The catalysed reaction is GTP + H2O = GDP + phosphate + H(+). GTP hydrolase that promotes the GTP-dependent binding of aminoacyl-tRNA to the A-site of ribosomes during protein biosynthesis. The polypeptide is Elongation factor Tu 2 (Rhodopseudomonas palustris (strain BisB5)).